The following is a 149-amino-acid chain: MSDSVELFTDGACKGNPGPGGWGALLVFKGVEKELWGGEANTTNNRMELTGAIRGLEELKRPCEVTLVTDSQYVMKGITEWMVNWKKRGWKTAAKEPVKNADLWQLLDEQVSRHNVKWQWVRGHIGHPGNERADQLANRGVDEVRGIKS.

An RNase H type-1 domain is found at 1–142 (MSDSVELFTD…ADQLANRGVD (142 aa)). Mg(2+)-binding residues include Asp10, Glu48, Asp70, and Asp134.

This sequence belongs to the RNase H family. As to quaternary structure, monomer. The cofactor is Mg(2+).

It is found in the cytoplasm. The catalysed reaction is Endonucleolytic cleavage to 5'-phosphomonoester.. Its function is as follows. Endonuclease that specifically degrades the RNA of RNA-DNA hybrids. The sequence is that of Ribonuclease H from Pseudomonas savastanoi pv. phaseolicola (strain 1448A / Race 6) (Pseudomonas syringae pv. phaseolicola (strain 1448A / Race 6)).